A 509-amino-acid chain; its full sequence is Maturase K (509 aa).

It belongs to the intron maturase 2 family. MatK subfamily.

It localises to the plastid. The protein resides in the chloroplast. Usually encoded in the trnK tRNA gene intron. Probably assists in splicing its own and other chloroplast group II introns. The protein is Maturase K of Galbulimima belgraveana (Northern pigeonberry ash).